Reading from the N-terminus, the 349-residue chain is tRNA pseudouridine synthase D (349 aa).

Phe-27 is a binding site for substrate. The Nucleophile role is filled by Asp-80. Asn-129 contacts substrate. One can recognise a TRUD domain in the interval 155–303 (GVPNYFGAQR…VEAARRAMLL (149 aa)). Substrate is bound at residue Phe-329.

It belongs to the pseudouridine synthase TruD family.

The enzyme catalyses uridine(13) in tRNA = pseudouridine(13) in tRNA. Its function is as follows. Responsible for synthesis of pseudouridine from uracil-13 in transfer RNAs. This chain is tRNA pseudouridine synthase D, found in Escherichia coli O17:K52:H18 (strain UMN026 / ExPEC).